We begin with the raw amino-acid sequence, 256 residues long: LexA repressor (256 aa).

The disordered stretch occupies residues 1 to 31 (MTSQGRGTRRGGTRGNVRAFPEGPTDAGLTP). The H-T-H motif DNA-binding region spans 53 to 73 (VREIGEAVGLTSTSSVAHQLK). Catalysis depends on for autocatalytic cleavage activity residues S180 and K217.

The protein belongs to the peptidase S24 family. In terms of assembly, homodimer.

It carries out the reaction Hydrolysis of Ala-|-Gly bond in repressor LexA.. Represses a number of genes involved in the response to DNA damage (SOS response), including recA and lexA. In the presence of single-stranded DNA, RecA interacts with LexA causing an autocatalytic cleavage which disrupts the DNA-binding part of LexA, leading to derepression of the SOS regulon and eventually DNA repair. This chain is LexA repressor, found in Frankia casuarinae (strain DSM 45818 / CECT 9043 / HFP020203 / CcI3).